The primary structure comprises 236 residues: MQNATIDQLPVSWQEQLPLCWREQLKEEWSKPYMQQLLIFLKQEYKEHTVYPEENCVFSALRSTPFDQVRVVILGQDPYPGKGQAHGLSFSVPEGQRLPPSLINIFRELKTDLGIENHKGCLQSWANQGILLLNTVLTVRAGEPFSHAGKGWELFTDAIVTKLIQERTHIIFVLWGAAARKKCELLFNSKHQHAVLSSPHPSPLAAHRGFFGCSHFSKINYLLNKLNKPMINWKLP.

Asp-77 (proton acceptor) is an active-site residue.

It belongs to the uracil-DNA glycosylase (UDG) superfamily. UNG family.

It localises to the cytoplasm. The catalysed reaction is Hydrolyzes single-stranded DNA or mismatched double-stranded DNA and polynucleotides, releasing free uracil.. Excises uracil residues from the DNA which can arise as a result of misincorporation of dUMP residues by DNA polymerase or due to deamination of cytosine. The sequence is that of Uracil-DNA glycosylase (ung) from Chlamydia pneumoniae (Chlamydophila pneumoniae).